Reading from the N-terminus, the 353-residue chain is Guanine nucleotide-binding protein subunit alpha (353 aa).

Gly2 carries N-myristoyl glycine lipidation. A lipid anchor (S-palmitoyl cysteine) is attached at Cys3. Residues 32 to 353 (NEIKMLLLGA…QENLRLCGLI (322 aa)) enclose the G-alpha domain. The tract at residues 35–48 (KMLLLGAGESGKST) is G1 motif. GTP-binding residues include Glu43, Ser44, Gly45, Lys46, Ser47, Thr48, Asp150, Leu175, Thr181, Gly203, Asn269, Lys270, Asp272, and Ala325. Ser47 lines the Mg(2+) pocket. A G2 motif region spans residues 173–181 (DVLRSRVKT). Thr181 contributes to the Mg(2+) binding site. The interval 196–205 (YRMFDVGGQR) is G3 motif. The G4 motif stretch occupies residues 265–272 (ILFLNKID). Positions 323–328 (TCATDT) are G5 motif.

It belongs to the G-alpha family. G(q) subfamily. As to quaternary structure, g proteins are composed of 3 units; alpha, beta and gamma. The alpha chain contains the guanine nucleotide binding site. The cofactor is Mg(2+).

Functionally, guanine nucleotide-binding proteins (G proteins) are involved as modulators or transducers in various transmembrane signaling systems. Involved in the mating pathway. This chain is Guanine nucleotide-binding protein subunit alpha (CGA1), found in Cochliobolus heterostrophus (strain C4 / ATCC 48331 / race T) (Southern corn leaf blight fungus).